Reading from the N-terminus, the 619-residue chain is Sodium-dependent dopamine transporter (619 aa).

The Cytoplasmic portion of the chain corresponds to 1–56; the sequence is MSKSKCSVGPMSSVVAPAKESNAVGPREVELILVKEQNGVQLTNSTLINPPQTPVE. Residues 57-95 traverse the membrane as a discontinuously helical segment; that stretch reads AQERETWSKKIDFLLSVIGFAVDLANVWRFPYLCYKNGG. Residues Gly75, Ala77, Val78, Asp79, and Asn82 each contribute to the Na(+) site. Asp79 is a binding site for dopamine. 2 consecutive transmembrane segments (helical) span residues 96-127 and 128-171; these read GAFL…NREG and AAGV…FSSF. Dopamine is bound by residues Ser149 and Gly153. The Extracellular portion of the chain corresponds to 172–235; that stretch reads TMDLPWIHCN…SRGIDDLGPP (64 aa). A disulfide bond links Cys180 and Cys189. N-linked (GlcNAc...) asparagine glycosylation is found at Asn181, Asn188, Asn196, and Asn204. 2 helical membrane-spanning segments follow: residues 236-255 and 256-286; these read RWQL…FSLW and KGVK…GVTL. Topologically, residues 287–305 are extracellular; that stretch reads PGAMDGIRAYLSVDFYRLC. Residues 306–334 form a discontinuously helical membrane-spanning segment; the sequence is EASVWIDAATQVCFSLGVGFGVLIAFSSY. Residue Gln316 coordinates chloride. Residue Phe319 coordinates dopamine. Positions 320 and 352 each coordinate Na(+). Ser320 serves as a coordination point for chloride. Residues 335–375 traverse the membrane as a helical segment; sequence NKFTNNCYRDAIITTSINSLTSFSSGFVVFSFLGYMAQKHN. Ser356 contributes to the chloride binding site. The Extracellular portion of the chain corresponds to 376–399; that stretch reads VPIRDVATDGPGLIFIIYPEAIAT. 3 helical membrane-spanning segments follow: residues 400–441, 442–465, and 466–498; these read LPLS…QLLH, RHRE…CVTN, and GGIY…AWFY. Leu417, Asp420, and Ser421 together coordinate Na(+). Dopamine contacts are provided by Ser421 and Ala422. The Cytoplasmic portion of the chain corresponds to 499–515; the sequence is GVQQFSDDIKQMTGQRP. Residues 516–541 traverse the membrane as a helical segment; that stretch reads NLYWRLCWKLVSPCFLLYVVVVSIVT. The Extracellular portion of the chain corresponds to 542 to 552; it reads FRPPHYGAYIF. The helical transmembrane segment at 553–582 threads the bilayer; the sequence is PDWANALGWIIATSSMAMVPIYATYKFCSL. The tract at residues 560 to 589 is interaction with TGFB1I1; it reads GWIIATSSMAMVPIYATYKFCSLPGSFREK. Residues 583–619 lie on the Cytoplasmic side of the membrane; the sequence is PGSFREKLAYAITPEKDHQLVDRGEVRQFTLRHWLLL.

Belongs to the sodium:neurotransmitter symporter (SNF) (TC 2.A.22) family. SLC6A3 subfamily. In terms of assembly, monomer. Homooligomer; disulfide-linked. Interacts with PRKCABP and TGFB1I1. Interacts (via N-terminus) with SYNGR3 (via N-terminus). Interacts with SLC18A2. Interacts with TOR1A (ATP-bound); TOR1A regulates SLC6A3 subcellular location. Interacts with alpha-synuclein/SNCA. Interacts with SEPTIN4. As to expression, brain. Expressed in the substantia nigra and ventral tegmental area, regions that contain dopaminergic cell bodies.

The protein localises to the cell membrane. It is found in the cell projection. Its subcellular location is the neuron projection. The protein resides in the axon. The enzyme catalyses dopamine(out) + chloride(out) + Na(+)(out) = dopamine(in) + chloride(in) + Na(+)(in). It carries out the reaction (R)-noradrenaline(out) + chloride(out) + Na(+)(out) = (R)-noradrenaline(in) + chloride(in) + Na(+)(in). The catalysed reaction is dopamine(out) + chloride(out) + 2 Na(+)(out) = dopamine(in) + chloride(in) + 2 Na(+)(in). With respect to regulation, inhibited by mazindol, cocaine, desipramine, GBR 12783 dihydrochloride, GBR 12909 dihydrochloride and nomifensine. Inhibited by zinc ions. In terms of biological role, mediates sodium- and chloride-dependent transport of dopamine. Also mediates sodium- and chloride-dependent transport of norepinephrine (also known as noradrenaline). Regulator of light-dependent retinal hyaloid vessel regression, downstream of OPN5 signaling. The polypeptide is Sodium-dependent dopamine transporter (Slc6a3) (Rattus norvegicus (Rat)).